Here is a 316-residue protein sequence, read N- to C-terminus: Beta-ketoacyl-[acyl-carrier-protein] synthase III 1 (316 aa).

Active-site residues include C112 and H243. The interval 244–248 is ACP-binding; the sequence is QANYR. The active site involves N273.

It belongs to the thiolase-like superfamily. FabH family. As to quaternary structure, homodimer.

It localises to the cytoplasm. The catalysed reaction is malonyl-[ACP] + acetyl-CoA + H(+) = 3-oxobutanoyl-[ACP] + CO2 + CoA. The protein operates within lipid metabolism; fatty acid biosynthesis. Catalyzes the condensation reaction of fatty acid synthesis by the addition to an acyl acceptor of two carbons from malonyl-ACP. Catalyzes the first condensation reaction which initiates fatty acid synthesis and may therefore play a role in governing the total rate of fatty acid production. Possesses both acetoacetyl-ACP synthase and acetyl transacylase activities. Its substrate specificity determines the biosynthesis of branched-chain and/or straight-chain of fatty acids. The sequence is that of Beta-ketoacyl-[acyl-carrier-protein] synthase III 1 from Vibrio parahaemolyticus serotype O3:K6 (strain RIMD 2210633).